Reading from the N-terminus, the 498-residue chain is Neoxanthin synthase, chloroplastic (498 aa).

Residues methionine 1–threonine 33 constitute a chloroplast transit peptide. Residues proline 16–serine 38 are disordered. Over residues isoleucine 22–threonine 33 the composition is skewed to polar residues. Residue valine 84–proline 112 participates in NAD(+) binding.

This sequence belongs to the lycopene cyclase family.

The protein resides in the plastid. Its subcellular location is the chloroplast. The enzyme catalyses all-trans-violaxanthin = all-trans-neoxanthin. The protein operates within carotenoid biosynthesis; neoxanthin biosynthesis. Its function is as follows. Involved in the synthesis of neoxanthin, the last product of carotenoid synthesis and a precursor of abscisic acid. The chain is Neoxanthin synthase, chloroplastic (NXS) from Solanum tuberosum (Potato).